A 127-amino-acid chain; its full sequence is ATP synthase epsilon chain (127 aa).

It belongs to the ATPase epsilon chain family. In terms of assembly, F-type ATPases have 2 components, CF(1) - the catalytic core - and CF(0) - the membrane proton channel. CF(1) has five subunits: alpha(3), beta(3), gamma(1), delta(1), epsilon(1). CF(0) has three main subunits: a, b and c.

It localises to the cell inner membrane. In terms of biological role, produces ATP from ADP in the presence of a proton gradient across the membrane. The chain is ATP synthase epsilon chain from Leptospira borgpetersenii serovar Hardjo-bovis (strain JB197).